A 1365-amino-acid chain; its full sequence is Histone-lysine N-methyltransferase NSD2 (1365 aa).

2 positions are modified to phosphothreonine: threonine 110 and threonine 114. At serine 121 the chain carries Phosphoserine. Residues 149–169 (ADVSQSEENEQKSDNKTRRNR) form a disordered region. Serine 172 carries the phosphoserine modification. Residues 222–286 (VGDLVWSKVS…FEKSLVAFEG (65 aa)) enclose the PWWP 1 domain. 3 disordered regions span residues 373-455 (MVDS…RKGD), 513-567 (QSEE…DKTA), and 594-658 (CKPL…SKKS). A Phosphoserine modification is found at serine 376. Phosphothreonine is present on threonine 422. The segment at residues 453 to 521 (KGDSAAQFLV…AQSEEDSGNG (69 aa)) is a DNA-binding region (HMG box). Residues 552–567 (DKHSLRKRETITDKTA) show a composition bias toward basic and acidic residues. The segment covering 603 to 623 (ASATASSALGFNKSSSPSASL) has biased composition (polar residues). The segment covering 632–648 (PGDEPSESPYESADETQ) has biased composition (acidic residues). 3 PHD-type zinc fingers span residues 667-713 (EYVC…CASG), 714-770 (IHSC…CHAS), and 831-875 (VSWC…CRAG). One can recognise a PWWP 2 domain in the interval 880–942 (FQDIIWVKLG…QARVFPYMEG (63 aa)). One can recognise an AWS domain in the interval 1011 to 1061 (SEIPKCNCKPTDENPCGSDSECLNRMLMFECHPQVCPAGEYCQNQCFTKRQ). The Zn(2+) site is built by cysteine 1016, cysteine 1018, cysteine 1026, cysteine 1032, cysteine 1041, cysteine 1046, and cysteine 1052. Positions 1063–1180 (PETKIIKTDG…AGTELTFNYN (118 aa)) constitute an SET domain. S-adenosyl-L-methionine is bound by residues tryptophan 1075, 1115–1118 (THFY), and 1141–1142 (NH). Cysteine 1144 serves as a coordination point for Zn(2+). Residue asparagine 1186 participates in S-adenosyl-L-methionine binding. A Post-SET domain is found at 1187 to 1203 (EKTVCRCGASNCSGFLG). Zn(2+) is bound at residue cysteine 1191. Arginine 1192 is a binding site for S-adenosyl-L-methionine. Zn(2+) is bound by residues cysteine 1193 and cysteine 1198. Residues 1206-1232 (PKTSASLSSEEKGKKAKKKTRRRRAKG) are disordered. Residues 1219-1230 (KKAKKKTRRRRA) show a composition bias toward basic residues. The PHD-type 4; atypical zinc finger occupies 1239–1286 (EDECFRCGDGGQLVLCDRKFCTKAYHLSCLGLGKRPFGKWECPWHHCD). The segment at 1329 to 1365 (RADSSSSTKTEKPFPESLKSKGKRKKRRCWRRVTDGK) is disordered. Over residues 1348-1359 (SKGKRKKRRCWR) the composition is skewed to basic residues.

The protein belongs to the class V-like SAM-binding methyltransferase superfamily. Histone-lysine methyltransferase family. SET2 subfamily. Interacts with HDAC1. Interacts (via PHD-type zinc fingers 1, 2 and 3) with SALL1. Interacts (via PHD-type 1, 2 and 3) with SALL4. Interacts with NANOG. Interacts with OGT. Interacts (via HMG box) with NKX2-5. In terms of tissue distribution, during B-cell development, expressed in early B2 cell progenitors (pre- and pro-B cells) with a decrease in expression at later stages.

The protein resides in the nucleus. It is found in the chromosome. The enzyme catalyses L-lysyl(36)-[histone H3] + S-adenosyl-L-methionine = N(6)-methyl-L-lysyl(36)-[histone H3] + S-adenosyl-L-homocysteine + H(+). It catalyses the reaction L-lysyl(36)-[histone H3] + 2 S-adenosyl-L-methionine = N(6),N(6)-dimethyl-L-lysyl(36)-[histone H3] + 2 S-adenosyl-L-homocysteine + 2 H(+). Functionally, histone methyltransferase which specifically dimethylates nucleosomal histone H3 at 'Lys-36' (H3K36me2). Also monomethylates nucleosomal histone H3 at 'Lys-36' (H3K36me) in vitro. Does not trimethylate nucleosomal histone H3 at 'Lys-36' (H3K36me3). However, specifically trimethylates histone H3 at 'Lys-36' (H3K36me3) at euchromatic regions in embryonic stem (ES) cells. By methylating histone H3 at 'Lys-36', involved in the regulation of gene transcription during various biological processes. In ES cells, associates with developmental transcription factors such as SALL1 and represses inappropriate gene transcription mediated by histone deacetylation. During heart development, associates with transcription factor NKX2-5 to repress transcription of NKX2-5 target genes. Plays an essential role in adipogenesis, by regulating expression of genes involved in pre-adipocyte differentiation. During T-cell receptor (TCR) and CD28-mediated T-cell activation, promotes the transcription of transcription factor BCL6 which is required for follicular helper T (Tfh) cell differentiation. During B-cell development, required for the generation of the B1 lineage. During B2 cell activation, may contribute to the control of isotype class switch recombination (CRS), splenic germinal center formation, and the humoral immune response. Plays a role in class switch recombination of the immunoglobulin heavy chain (IgH) locus during B-cell activation. By regulating the methylation of histone H3 at 'Lys-36' and histone H4 at 'Lys-20' at the IgH locus, involved in TP53BP1 recruitment to the IgH switch region and promotes the transcription of IgA. In terms of biological role, histone methyltransferase which specifically dimethylates nucleosomal histone H3 at 'Lys-36' (H3K36me2). Mono-, di- and tri-methylates histone H3 at 'Lys-27' (H3K27me, H3K27me2, H3K27me3). Methylation of histone H3 at 'Lys-27' is controversial. May act as a transcription regulator that binds DNA and suppresses IL5 transcription through HDAC recruitment. In Mus musculus (Mouse), this protein is Histone-lysine N-methyltransferase NSD2 (Nsd2).